The primary structure comprises 640 residues: Probable potassium transport system protein Kup 2 (640 aa).

Residues 1–20 (MTADIAATPAETPATNGHGD) are disordered. The next 12 helical transmembrane spans lie at 30–50 (LTLG…LYAL), 71–91 (VVSL…VVIL), 117–137 (ASII…DAVI), 155–175 (AAFD…LFAV), 183–203 (VAAF…IAAF), 224–244 (FMLH…LAVT), 265–285 (WLFV…ALVI), 294–314 (PFFL…ATVA), 363–383 (LLLV…ALAS), 385–405 (YGIS…VVIW), 410–430 (WSPI…LTFL), and 437–457 (VLEG…LMYT).

The protein belongs to the HAK/KUP transporter (TC 2.A.72) family.

The protein localises to the cell inner membrane. It catalyses the reaction K(+)(in) + H(+)(in) = K(+)(out) + H(+)(out). In terms of biological role, transport of potassium into the cell. Likely operates as a K(+):H(+) symporter. In Bradyrhizobium sp. (strain ORS 278), this protein is Probable potassium transport system protein Kup 2.